Consider the following 202-residue polypeptide: LexA repressor (202 aa).

A DNA-binding region (H-T-H motif) is located at residues 28–47; that stretch reads IREIGDQFGITAKGAYDHLK. Residues serine 126 and lysine 163 each act as for autocatalytic cleavage activity in the active site.

This sequence belongs to the peptidase S24 family. As to quaternary structure, homodimer.

It catalyses the reaction Hydrolysis of Ala-|-Gly bond in repressor LexA.. Functionally, represses a number of genes involved in the response to DNA damage (SOS response), including recA and lexA. In the presence of single-stranded DNA, RecA interacts with LexA causing an autocatalytic cleavage which disrupts the DNA-binding part of LexA, leading to derepression of the SOS regulon and eventually DNA repair. The polypeptide is LexA repressor (Leptospira biflexa serovar Patoc (strain Patoc 1 / Ames)).